The following is a 32-amino-acid chain: uncharacterized protein (32 aa).

This is an uncharacterized protein from Saccharolobus islandicus (Sulfolobus islandicus).